Here is a 311-residue protein sequence, read N- to C-terminus: Transmembrane protein DDB_G0273707/DDB_G0273361 (311 aa).

The disordered stretch occupies residues M1 to N113. The N-linked (GlcNAc...) asparagine glycan is linked to N8. Positions L9–T18 are enriched in polar residues. N35, N38, N62, and N76 each carry an N-linked (GlcNAc...) asparagine glycan. 2 stretches are compositionally biased toward low complexity: residues S37–N67 and N76–E111. Residues N95 to L124 adopt a coiled-coil conformation. The next 5 helical transmembrane spans lie at L150 to L170, I181 to P201, L208 to Y228, V235 to H255, and F276 to I296.

It localises to the membrane. The protein is Transmembrane protein DDB_G0273707/DDB_G0273361 of Dictyostelium discoideum (Social amoeba).